We begin with the raw amino-acid sequence, 291 residues long: N-acetylmannosamine kinase (291 aa).

Residues 5–12 and 132–139 contribute to the ATP site; these read AIDIGGTK and GVGGGVVS. Positions 156, 166, 168, and 173 each coordinate Zn(2+).

The protein belongs to the ROK (NagC/XylR) family. NanK subfamily. In terms of assembly, homodimer.

The catalysed reaction is an N-acyl-D-mannosamine + ATP = an N-acyl-D-mannosamine 6-phosphate + ADP + H(+). It participates in amino-sugar metabolism; N-acetylneuraminate degradation; D-fructose 6-phosphate from N-acetylneuraminate: step 2/5. Its function is as follows. Catalyzes the phosphorylation of N-acetylmannosamine (ManNAc) to ManNAc-6-P. The chain is N-acetylmannosamine kinase from Escherichia coli O9:H4 (strain HS).